The primary structure comprises 240 residues: Sec-independent protein translocase protein TatC (240 aa).

Transmembrane regions (helical) follow at residues 15–35 (IISIIAFLIGSGIAFYFAKYV), 61–81 (LFILIKISLAVGFIIASPVIL), 103–123 (LLLGSILLFMLGALFAYFIVL), 152–172 (FVLKLVVAFGIAFEMPIVLYV), 191–211 (FIVIAFVIGAIIAPDVSTQVL), and 212–232 (MAIPLLLLYEISIFLGKLATR).

The protein belongs to the TatC family. Forms a complex with TatA.

It localises to the cell inner membrane. Its function is as follows. Part of the twin-arginine translocation (Tat) system that transports large folded proteins containing a characteristic twin-arginine motif in their signal peptide across membranes. This is Sec-independent protein translocase protein TatC from Aquifex aeolicus (strain VF5).